The chain runs to 204 residues: VEL1-related protein AC977.05c (204 aa).

The first 17 residues, methionine 1 to alanine 17, serve as a signal peptide directing secretion.

This sequence belongs to the VEL1 family.

The protein localises to the cytoplasm. It is found in the cytosol. The polypeptide is VEL1-related protein AC977.05c (Schizosaccharomyces pombe (strain 972 / ATCC 24843) (Fission yeast)).